The primary structure comprises 320 residues: Lipoyl synthase (320 aa).

Residues 1 to 27 are disordered; that stretch reads MRVEIDHRNSGGGKLRHPEKQHRPDNP. The span at 16–25 shows a compositional bias: basic and acidic residues; sequence RHPEKQHRPD. Cys61, Cys66, Cys72, Cys87, Cys91, Cys94, and Ser300 together coordinate [4Fe-4S] cluster. The region spanning 73-289 is the Radical SAM core domain; the sequence is WSQRHATMMI…AAMARAKGFL (217 aa).

The protein belongs to the radical SAM superfamily. Lipoyl synthase family. The cofactor is [4Fe-4S] cluster.

The protein resides in the cytoplasm. The enzyme catalyses [[Fe-S] cluster scaffold protein carrying a second [4Fe-4S](2+) cluster] + N(6)-octanoyl-L-lysyl-[protein] + 2 oxidized [2Fe-2S]-[ferredoxin] + 2 S-adenosyl-L-methionine + 4 H(+) = [[Fe-S] cluster scaffold protein] + N(6)-[(R)-dihydrolipoyl]-L-lysyl-[protein] + 4 Fe(3+) + 2 hydrogen sulfide + 2 5'-deoxyadenosine + 2 L-methionine + 2 reduced [2Fe-2S]-[ferredoxin]. It functions in the pathway protein modification; protein lipoylation via endogenous pathway; protein N(6)-(lipoyl)lysine from octanoyl-[acyl-carrier-protein]: step 2/2. In terms of biological role, catalyzes the radical-mediated insertion of two sulfur atoms into the C-6 and C-8 positions of the octanoyl moiety bound to the lipoyl domains of lipoate-dependent enzymes, thereby converting the octanoylated domains into lipoylated derivatives. This Acidiphilium cryptum (strain JF-5) protein is Lipoyl synthase.